The primary structure comprises 46 residues: Diuretic hormone (46 aa).

Residue Ile46 is modified to Isoleucine amide.

This sequence belongs to the sauvagine/corticotropin-releasing factor/urotensin I family.

It is found in the secreted. Functionally, regulation of fluid secretion. Stimulates primary urine secretion by Malpighian tubules and causes a dose-dependent stimulation of cAMP levels in the tubules. In Acheta domesticus (House cricket), this protein is Diuretic hormone.